Here is a 406-residue protein sequence, read N- to C-terminus: GTPase Obg (406 aa).

One can recognise an Obg domain in the interval 1-159; that stretch reads MRFVDEAVIT…REIRLELKVL (159 aa). Residues 120–143 form a disordered region; the sequence is GGEGGLGNTHFKSSTNRAPRKCTT. The 174-residue stretch at 160–333 folds into the OBG-type G domain; the sequence is ADVGLLGMPN…VVYYLMDQIE (174 aa). Residues 166-173, 191-195, 213-216, 283-286, and 314-316 contribute to the GTP site; these read GMPNAGKS, FTTMV, DIPG, NKLD, and SGL. Residues Ser-173 and Thr-193 each coordinate Mg(2+). The disordered stretch occupies residues 381-406; sequence ESMMDDDDDFDDDEDDGDVESIYVRD. Acidic residues predominate over residues 383–399; the sequence is MMDDDDDFDDDEDDGDV.

This sequence belongs to the TRAFAC class OBG-HflX-like GTPase superfamily. OBG GTPase family. As to quaternary structure, monomer. The cofactor is Mg(2+).

It localises to the cytoplasm. An essential GTPase which binds GTP, GDP and possibly (p)ppGpp with moderate affinity, with high nucleotide exchange rates and a fairly low GTP hydrolysis rate. Plays a role in control of the cell cycle, stress response, ribosome biogenesis and in those bacteria that undergo differentiation, in morphogenesis control. The protein is GTPase Obg of Acinetobacter baumannii (strain SDF).